Reading from the N-terminus, the 434-residue chain is ATP-dependent protease ATPase subunit HslU (434 aa).

Residues Val18, 60–65, Asp247, Glu312, and Arg384 contribute to the ATP site; that span reads GVGKTE.

Belongs to the ClpX chaperone family. HslU subfamily. As to quaternary structure, a double ring-shaped homohexamer of HslV is capped on each side by a ring-shaped HslU homohexamer. The assembly of the HslU/HslV complex is dependent on binding of ATP.

It is found in the cytoplasm. ATPase subunit of a proteasome-like degradation complex; this subunit has chaperone activity. The binding of ATP and its subsequent hydrolysis by HslU are essential for unfolding of protein substrates subsequently hydrolyzed by HslV. HslU recognizes the N-terminal part of its protein substrates and unfolds these before they are guided to HslV for hydrolysis. This chain is ATP-dependent protease ATPase subunit HslU, found in Phenylobacterium zucineum (strain HLK1).